The following is a 276-amino-acid chain: Protein HemX (276 aa).

8 helical membrane passes run 9 to 29 (LNEG…IDFL), 40 to 60 (FWLL…FMWV), 66 to 86 (VLNV…LSLV), 93 to 113 (VDFI…IHTF), 132 to 152 (LVIH…SFVF), 187 to 207 (VLNV…VIWA), 217 to 237 (FDAK…YLYI), and 247 to 267 (VAAL…FLLG).

It to M.leprae U1620K.

It is found in the cell membrane. Its function is as follows. Required for HemL synthesis. This Bacillus subtilis (strain 168) protein is Protein HemX (hemX).